Consider the following 659-residue polypeptide: MVLSTEENRSVDLVNLPSVPLPDGEAGVGENNKDSVNNLCSQYEEKVRPCIDLIDSLRALGVEQDLALPAIAVIGDQSSGKSSVLEALSGVALPRGSGIVTRCPLVLKLKKLNQGEEWKGKVTYDDIEVELSDPSEVEEAINTGQNHIAGVGLGISDKLISLDVSSPHVPDLTLIDLPGITRVAVGNQPSDIGRQIKRLITNYIQKQETINLVVVPSNVDIATTEALSMAQEVDPDGDRTIGILTKPDLVDRGTEDKVVDVVRNLVCHLKKGYMIVKCRGQQDIQEQLSLAEALQKEQVFFKEHPQFRALLEDGKATVPCLAERLTMELISHICKSLPLLENQIKESHQSTSEELQKYGADIPEDENEKTLFLIEKINAFNQDITAIVEGEEIVREKECRLFTKLRKEFFLWSEEIERNFQKGSDALYKEVYTFEMQYRGRELPGFVNYKTFENIIRRQIKTLEEPAMEMLHKVTEIVRAAFTTVSEKNFSEFFNLHRTTKSKLEDIRLEQETEAEKAIRLHFQMEQIIYCQDQIYRKALQKVREEEAEEEERKHGKSRSAQSPNLQTSSMDEIFQHLNAYRQEAHNCISSHIPLIIQYFILKMFAEKLQKGMLQLLQDKDSCSWLLKEKSDTSEKRRFLKERLARLAQAQRRLAKFPG.

The 274-residue stretch at 65-338 (DLALPAIAVI…LISHICKSLP (274 aa)) folds into the Dynamin-type G domain. The interval 75–82 (GDQSSGKS) is G1 motif. Position 75 to 82 (75 to 82 (GDQSSGKS)) interacts with GTP. A G2 motif region spans residues 100–102 (VTR). The segment at 176–179 (DLPG) is G3 motif. GTP is bound by residues 176-180 (DLPGI) and 245-248 (TKPD). The interval 245 to 248 (TKPD) is G4 motif. The G5 motif stretch occupies residues 277–280 (KCRG). Positions 547-568 (EAEEEERKHGKSRSAQSPNLQT) are disordered. The segment covering 559 to 568 (RSAQSPNLQT) has biased composition (polar residues). The region spanning 571–659 (MDEIFQHLNA…AQRRLAKFPG (89 aa)) is the GED domain.

This sequence belongs to the TRAFAC class dynamin-like GTPase superfamily. Dynamin/Fzo/YdjA family.

It localises to the cytoplasm. Does not show activity against influenza virus or VSV; although it only differs from Mx2 by 8 positions. In Rattus norvegicus (Rat), this protein is Interferon-induced GTP-binding protein Mx3 (Mx3).